A 444-amino-acid polypeptide reads, in one-letter code: N-succinylarginine dihydrolase (444 aa).

Substrate is bound by residues Ala19–Ser28, Asn110, and His137–Arg138. Glu174 is a catalytic residue. Arg214 contacts substrate. The active site involves His250. Residues Asp252 and Asn362 each coordinate substrate. The active-site Nucleophile is the Cys368.

The protein belongs to the succinylarginine dihydrolase family. Homodimer.

The catalysed reaction is N(2)-succinyl-L-arginine + 2 H2O + 2 H(+) = N(2)-succinyl-L-ornithine + 2 NH4(+) + CO2. Its pathway is amino-acid degradation; L-arginine degradation via AST pathway; L-glutamate and succinate from L-arginine: step 2/5. In terms of biological role, catalyzes the hydrolysis of N(2)-succinylarginine into N(2)-succinylornithine, ammonia and CO(2). The chain is N-succinylarginine dihydrolase from Shewanella amazonensis (strain ATCC BAA-1098 / SB2B).